The sequence spans 283 residues: 2-hydroxy-6-oxononadienedioate/2-hydroxy-6-oxononatrienedioate hydrolase (283 aa).

The AB hydrolase-1 domain maps to 35-269 (VVVMFHGSGP…KCGHWAQWEH (235 aa)). Residue H263 is the Proton acceptor of the active site.

This sequence belongs to the AB hydrolase superfamily. MhpC family. As to quaternary structure, homodimer.

It catalyses the reaction (2Z,4E)-2-hydroxy-6-oxonona-2,4-dienedioate + H2O = (2Z)-2-hydroxypenta-2,4-dienoate + succinate + H(+). It carries out the reaction (2Z,4E,7E)-2-hydroxy-6-oxonona-2,4,7-trienedioate + H2O = (2Z)-2-hydroxypenta-2,4-dienoate + fumarate + H(+). The protein operates within aromatic compound metabolism; 3-phenylpropanoate degradation. Functionally, catalyzes the cleavage of the C5-C6 bond of 2-hydroxy-6-oxononadienedioate and 2-hydroxy-6-oxononatrienedioate, a dienol ring fission product of the bacterial meta-cleavage pathway for degradation of phenylpropionic acid. This Pseudomonas sp protein is 2-hydroxy-6-oxononadienedioate/2-hydroxy-6-oxononatrienedioate hydrolase.